The chain runs to 634 residues: tRNA uridine 5-carboxymethylaminomethyl modification enzyme MnmG (634 aa).

Position 14 to 19 (14 to 19 (GGGHAG)) interacts with FAD. 279–293 (GPRYCPSIEDKVVRF) serves as a coordination point for NAD(+).

It belongs to the MnmG family. In terms of assembly, homodimer. Heterotetramer of two MnmE and two MnmG subunits. It depends on FAD as a cofactor.

Its subcellular location is the cytoplasm. Its function is as follows. NAD-binding protein involved in the addition of a carboxymethylaminomethyl (cmnm) group at the wobble position (U34) of certain tRNAs, forming tRNA-cmnm(5)s(2)U34. The polypeptide is tRNA uridine 5-carboxymethylaminomethyl modification enzyme MnmG (Xanthomonas euvesicatoria pv. vesicatoria (strain 85-10) (Xanthomonas campestris pv. vesicatoria)).